Consider the following 190-residue polypeptide: Ribosome hibernation promotion factor (190 aa).

Positions 101–190 (RDRGDQEVFV…KYGLIQTSEQ (90 aa)) are required for ribosome-binding.

Belongs to the HPF/YfiA ribosome-associated protein family. Long HPF subfamily. As to quaternary structure, interacts with 100S ribosomes during exponential growth, as 100S ribosomes decrease (after 28 hours) also found associated with 30s and 50S subunits.

The protein localises to the cytoplasm. Its function is as follows. Required and sufficient for dimerization of active 70S ribosomes into 100S ribosomes. 110S ribosomes are probably translationally inactive and may serve as a reservoir of easily reactivated ribosomes when necessary in the cell. Also reduces the translation efficiency of a small number of genes. Unlike E.coli, 100S ribosomes are present during exponential growth and decrease during stationary phase. This strain produces 30% fewer 100S ribosomes than strain N315 and RN4200 under the same growth conditions. The sequence is that of Ribosome hibernation promotion factor from Staphylococcus aureus (strain USA300).